The sequence spans 505 residues: Glycerol kinase 1 (505 aa).

T13 lines the ADP pocket. ATP-binding residues include T13, T14, and S15. Sn-glycerol 3-phosphate is bound at residue T13. Position 17 (R17) interacts with ADP. Sn-glycerol 3-phosphate-binding residues include R83, E84, and Y135. 3 residues coordinate glycerol: R83, E84, and Y135. H231 bears the Phosphohistidine; by HPr mark. D245 serves as a coordination point for sn-glycerol 3-phosphate. D245 and Q246 together coordinate glycerol. ADP contacts are provided by T267 and G310. ATP is bound by residues T267, G310, Q314, and G411. ADP contacts are provided by G411 and N415.

It belongs to the FGGY kinase family. Homotetramer and homodimer (in equilibrium). The phosphoenolpyruvate-dependent sugar phosphotransferase system (PTS), including enzyme I, and histidine-containing protein (HPr) are required for the phosphorylation, which leads to the activation of the enzyme.

It carries out the reaction glycerol + ATP = sn-glycerol 3-phosphate + ADP + H(+). It participates in polyol metabolism; glycerol degradation via glycerol kinase pathway; sn-glycerol 3-phosphate from glycerol: step 1/1. With respect to regulation, activated by phosphorylation and inhibited by fructose 1,6-bisphosphate (FBP). In terms of biological role, key enzyme in the regulation of glycerol uptake and metabolism. Catalyzes the phosphorylation of glycerol to yield sn-glycerol 3-phosphate. The sequence is that of Glycerol kinase 1 from Lactiplantibacillus plantarum (strain ATCC BAA-793 / NCIMB 8826 / WCFS1) (Lactobacillus plantarum).